A 424-amino-acid chain; its full sequence is Serine--tRNA ligase (424 aa).

230–232 (TAE) serves as a coordination point for L-serine. 261-263 (RSE) is an ATP binding site. Glutamate 284 lines the L-serine pocket. Residue 348-351 (EISS) coordinates ATP. Serine 384 is a binding site for L-serine.

It belongs to the class-II aminoacyl-tRNA synthetase family. Type-1 seryl-tRNA synthetase subfamily. As to quaternary structure, homodimer. The tRNA molecule binds across the dimer.

It localises to the cytoplasm. It catalyses the reaction tRNA(Ser) + L-serine + ATP = L-seryl-tRNA(Ser) + AMP + diphosphate + H(+). The enzyme catalyses tRNA(Sec) + L-serine + ATP = L-seryl-tRNA(Sec) + AMP + diphosphate + H(+). It functions in the pathway aminoacyl-tRNA biosynthesis; selenocysteinyl-tRNA(Sec) biosynthesis; L-seryl-tRNA(Sec) from L-serine and tRNA(Sec): step 1/1. Catalyzes the attachment of serine to tRNA(Ser). Is also able to aminoacylate tRNA(Sec) with serine, to form the misacylated tRNA L-seryl-tRNA(Sec), which will be further converted into selenocysteinyl-tRNA(Sec). This Streptococcus pneumoniae (strain ATCC 700669 / Spain 23F-1) protein is Serine--tRNA ligase.